We begin with the raw amino-acid sequence, 969 residues long: Leucine--tRNA ligase (969 aa).

Residues 45-55 (PYTNAPLHIGH) carry the 'HIGH' region motif. A 'KMSKS' region motif is present at residues 649-653 (KMSKS). Lys-652 is an ATP binding site.

It belongs to the class-I aminoacyl-tRNA synthetase family.

It is found in the cytoplasm. The enzyme catalyses tRNA(Leu) + L-leucine + ATP = L-leucyl-tRNA(Leu) + AMP + diphosphate. This chain is Leucine--tRNA ligase, found in Staphylothermus marinus (strain ATCC 43588 / DSM 3639 / JCM 9404 / F1).